The following is a 660-amino-acid chain: DNA ligase (660 aa).

Residues 31 to 35, 79 to 80, and Glu111 contribute to the NAD(+) site; these read DKEYD and SL. Residue Lys113 is the N6-AMP-lysine intermediate of the active site. Arg134, Glu168, Lys280, and Lys304 together coordinate NAD(+). Zn(2+) contacts are provided by Cys397, Cys400, Cys413, and Cys419. In terms of domain architecture, BRCT spans 577 to 660; that stretch reads RQESIFSGKT…LDEAAFEALL (84 aa).

It belongs to the NAD-dependent DNA ligase family. LigA subfamily. The cofactor is Mg(2+). Mn(2+) serves as cofactor.

It catalyses the reaction NAD(+) + (deoxyribonucleotide)n-3'-hydroxyl + 5'-phospho-(deoxyribonucleotide)m = (deoxyribonucleotide)n+m + AMP + beta-nicotinamide D-nucleotide.. Its function is as follows. DNA ligase that catalyzes the formation of phosphodiester linkages between 5'-phosphoryl and 3'-hydroxyl groups in double-stranded DNA using NAD as a coenzyme and as the energy source for the reaction. It is essential for DNA replication and repair of damaged DNA. This is DNA ligase from Alkaliphilus metalliredigens (strain QYMF).